The chain runs to 329 residues: Vanillate O-demethylase oxygenase subunit (329 aa).

The 84-residue stretch at 1–84 (MICNERMVIY…AQERHGFIWV (84 aa)) folds into the Rieske domain. Positions 24, 26, 43, and 46 each coordinate [2Fe-2S] cluster.

This sequence belongs to the bacterial ring-hydroxylating dioxygenase alpha subunit family. In terms of assembly, this demethylase system consists of two proteins: an oxygenase and an oxygenase reductase. The cofactor is [2Fe-2S] cluster. It depends on Fe cation as a cofactor.

The catalysed reaction is vanillate + NADH + O2 + H(+) = 3,4-dihydroxybenzoate + formaldehyde + NAD(+) + H2O. The protein operates within xenobiotic degradation; vanillyl-alcohol degradation. This Pseudomonas sp. (strain ATCC 19151) protein is Vanillate O-demethylase oxygenase subunit (vanA).